A 76-amino-acid polypeptide reads, in one-letter code: Small ribosomal subunit protein bS21A (76 aa).

A compositionally biased stretch (basic and acidic residues) spans 35–52 (HYEKPSEKRAREKAEAVR). A disordered region spans residues 35–76 (HYEKPSEKRAREKAEAVRRARKLARKRAQREGLVSGRPAAAR). The segment covering 53–62 (RARKLARKRA) has biased composition (basic residues).

The protein belongs to the bacterial ribosomal protein bS21 family.

The sequence is that of Small ribosomal subunit protein bS21A from Chelativorans sp. (strain BNC1).